Here is an 81-residue protein sequence, read N- to C-terminus: Small cysteine-rich protein 1 2 (81 aa).

An N-terminal signal peptide occupies residues 1-19; the sequence is MGVNFNICLLLLLVATISS. Positions 20 to 39 are excised as a propeptide; the sequence is QPLKATEKDDSTDENPFGIY.

Belongs to the Cnidaria small cysteine-rich protein (SCRiP) family. alpha subfamily. In terms of processing, the basic myotoxic domain of rattlesnake crotamine toxins (with 6 Cys residues) has been detected in this protein. However, this protein contains 2 additional Cys at the C-terminal region. Hence, this protein may contain 4 disulfide bonds instead of the 3 suggested by the myotoxin domain.

It is found in the secreted. The protein localises to the nematocyst. Functionally, induces neurotoxic symptoms on zebrafish. Has also been claimed to be implied in calcification, but tests on homolog proteins suggest that proteins of this family have a neurotoxic function and not a calcification function. The chain is Small cysteine-rich protein 1 2 from Montipora capitata (Rice coral).